We begin with the raw amino-acid sequence, 35 residues long: Alpha-amanitin proprotein (35 aa).

The propeptide occupies 1–10 (MSDINATRLP). I11 carries the (3R,4R)-4,5-dihydroxyisoleucine; in form alpha-amanitin modification. I11 bears the (3R,4S)-4-hydroxyisoleucine; in form gamma-amanitin mark. Residues 11 to 18 (IWGIGCNP) constitute a cross-link (cyclopeptide (Ile-Pro)). A cross-link (2'-cysteinyl-6'-hydroxytryptophan sulfoxide (Trp-Cys)) is located at residues 12-16 (WGIGC). P18 is modified (4-hydroxyproline). Residues 19–35 (CVGDDVTTLLTRGEALC) constitute a propeptide that is removed on maturation.

The protein belongs to the MSDIN fungal toxin family. In terms of processing, processed by the macrocyclase-peptidase enzyme POPB to yield a toxic cyclic decapeptide. POPB first removes 10 residues from the N-terminus. Conformational trapping of the remaining peptide forces the enzyme to release this intermediate rather than proceed to macrocyclization. The enzyme rebinds the remaining peptide in a different conformation and catalyzes macrocyclization of the N-terminal 8 residues.

Functionally, major toxin belonging to the bicyclic octapeptides amatoxins that acts by binding non-competitively to RNA polymerase II and greatly slowing the elongation of transcripts from target promoters. This is Alpha-amanitin proprotein from Amanita bisporigera (Destroying angel).